A 443-amino-acid polypeptide reads, in one-letter code: Fatty acid desaturase 3 (443 aa).

The Cytoplasmic portion of the chain corresponds to 1–130; sequence MGGVGEPDWE…EDMKLFEAKP (130 aa). A Cytochrome b5 heme-binding domain is found at 18-95; it reads LPTLRWEQVR…LQPLLIGELA (78 aa). Residues 131–151 traverse the membrane as a helical segment; the sequence is AFFGLLLGHILAMEVLAWLMI. Position 152 (Y152) is a topological domain, lumenal. A helical transmembrane segment spans residues 153-173; it reads MLGPGWVPSTLAALILAISQA. At 174-259 the chain is on the cytoplasmic side; sequence QSWCLQHDLG…KKKRRYLPYN (86 aa). Positions 180-184 match the Histidine box-1 motif; sequence HDLGH. The Histidine box-2 motif lies at 217 to 221; sequence HFQHH. A helical membrane pass occupies residues 260–280; the sequence is HQHLYFFLIGPPLLTLVNFEV. Residues 281-282 are Lumenal-facing; that stretch reads EN. A helical membrane pass occupies residues 283 to 303; sequence LAYMLVCMQWMDLLWAASFYA. R304 is a topological domain (cytoplasmic). A helical membrane pass occupies residues 305 to 325; that stretch reads FLLSYIPFYGIPGALLLFVAV. The Lumenal portion of the chain corresponds to 326–443; the sequence is RVLESHWFVW…NVWLEAYLHQ (118 aa). Positions 381-385 match the Histidine box-3 motif; that stretch reads QIEHH.

This sequence belongs to the fatty acid desaturase type 1 family.

The protein localises to the endoplasmic reticulum membrane. The catalysed reaction is an N-acylsphing-4-enine + 2 Fe(II)-[cytochrome b5] + O2 + 2 H(+) = an N-acyl-sphinga-4E,14Z-dienine + 2 Fe(III)-[cytochrome b5] + 2 H2O. It catalyses the reaction N-(hexanoyl)sphing-4-enine + 2 Fe(II)-[cytochrome b5] + O2 + 2 H(+) = N-hexanoyl-sphinga-4E,14Z-dienine + 2 Fe(III)-[cytochrome b5] + 2 H2O. It carries out the reaction sphing-4-enine + 2 Fe(II)-[cytochrome b5] + O2 + 2 H(+) = sphinga-4E,14Z-dienine + 2 Fe(III)-[cytochrome b5] + 2 H2O. The enzyme catalyses (11E)-octadecenoyl-CoA + 2 Fe(II)-[cytochrome b5] + O2 + 2 H(+) = (11E,13Z)-octadecadienoyl-CoA + 2 Fe(III)-[cytochrome b5] + 2 H2O. The catalysed reaction is N-acyl-1-deoxysphinganine + 2 Fe(II)-[cytochrome b5] + O2 + 2 H(+) = N-acyl-1-deoxysphing-14Z-enine + 2 Fe(III)-[cytochrome b5] + 2 H2O. It catalyses the reaction an N-acylsphinganine + 2 Fe(II)-[cytochrome b5] + O2 + 2 H(+) = an N-acylsphing-14Z-enine + 2 Fe(III)-[cytochrome b5] + 2 H2O. It participates in lipid metabolism; polyunsaturated fatty acid biosynthesis. It functions in the pathway lipid metabolism; sphingolipid metabolism. Mammals have different sphingoid bases that differ in their length and/or pattern of desaturation and hydroxyl groups. The predominant sphingoid base that comprises mammalian ceramides is sphing-4-enine (sphingosine or SPH) which has a trans (E) desaturation at carbon 4. FADS3 is a desaturase that introduces a cis (Z) double bond between carbon 14 and carbon 15 of the sphingoid base (also known as long chain base, LCB), producing LCBs such as sphinga-4,14-dienine (SPD, d18:2(4E,14Z)) from SPH. Prefers SPH-containing ceramides (N-acylsphing-4-enines) as substrates. Capable of metabolizing also the SPH in its free form. SPD ceramides occur widely in mammalian tissues and cells. Due to their unusual structure containing a cis double bond, SPD ceramides may have an opposite, negative role in lipid microdomain formation relative to conventional ceramides. Could be involved in the detoxification of 1-deoxy sphingolipids, by desaturating the cytotoxic 1-deoxysphinganine (1-deoxySA, m18:0), produced under pathological conditions, to 1-deoxysphingenine (1-deoxysphingosine, 1-deoxySO, m18:1). Although prefers SPH-containing ceramides (N-acylsphing-4-enines) as substrates, it also exhibits activity toward dihydrosphingosine-containing CERs (N-acylsphinganines) and produces 14Z-SPH-containing sphingolipids. Its desaturase mechanism involves an electron transfer facilitated by cytochrome b5. FADS3 also acts as a methyl-end fatty acyl coenzyme A (CoA) desaturase that introduces a cis double bond between the preexisting double bond and the terminal methyl group of the fatty acyl chain. Desaturates (11E)-octadecenoate (trans-vaccenoate, the predominant trans fatty acid in human milk) at carbon 13 to generate (11E,13Z)-octadecadienoate (also known as conjugated linoleic acid 11E,13Z-CLA). The protein is Fatty acid desaturase 3 of Bos taurus (Bovine).